The chain runs to 764 residues: 1,4-alpha-glucan branching enzyme GlgB (764 aa).

Residues 1-46 are disordered; that stretch reads MSAARQPSPTVRDKAAPEPAAPAAPKGARAPRARRAAPPHGVRPAP. Residues 17 to 28 are compositionally biased toward low complexity; it reads PEPAAPAAPKGA. The Nucleophile role is filled by Asp440. Glu493 functions as the Proton donor in the catalytic mechanism.

Belongs to the glycosyl hydrolase 13 family. GlgB subfamily. Monomer.

It catalyses the reaction Transfers a segment of a (1-&gt;4)-alpha-D-glucan chain to a primary hydroxy group in a similar glucan chain.. It participates in glycan biosynthesis; glycogen biosynthesis. Catalyzes the formation of the alpha-1,6-glucosidic linkages in glycogen by scission of a 1,4-alpha-linked oligosaccharide from growing alpha-1,4-glucan chains and the subsequent attachment of the oligosaccharide to the alpha-1,6 position. This Kitasatospora aureofaciens (Streptomyces aureofaciens) protein is 1,4-alpha-glucan branching enzyme GlgB (glgB).